A 389-amino-acid polypeptide reads, in one-letter code: Acetylornithine aminotransferase (389 aa).

Residues 96-97 (GT) and F123 each bind pyridoxal 5'-phosphate. R126 is a binding site for N(2)-acetyl-L-ornithine. 207-210 (DEVQ) is a pyridoxal 5'-phosphate binding site. K236 carries the post-translational modification N6-(pyridoxal phosphate)lysine. S264 contributes to the N(2)-acetyl-L-ornithine binding site. Residue T265 participates in pyridoxal 5'-phosphate binding.

The protein belongs to the class-III pyridoxal-phosphate-dependent aminotransferase family. ArgD subfamily. In terms of assembly, homodimer. Requires pyridoxal 5'-phosphate as cofactor.

The protein resides in the cytoplasm. It carries out the reaction N(2)-acetyl-L-ornithine + 2-oxoglutarate = N-acetyl-L-glutamate 5-semialdehyde + L-glutamate. It functions in the pathway amino-acid biosynthesis; L-arginine biosynthesis; N(2)-acetyl-L-ornithine from L-glutamate: step 4/4. The sequence is that of Acetylornithine aminotransferase from Lactiplantibacillus plantarum (strain ATCC BAA-793 / NCIMB 8826 / WCFS1) (Lactobacillus plantarum).